A 476-amino-acid chain; its full sequence is Argininosuccinate lyase (476 aa).

This sequence belongs to the lyase 1 family. Argininosuccinate lyase subfamily.

The protein localises to the cytoplasm. It carries out the reaction 2-(N(omega)-L-arginino)succinate = fumarate + L-arginine. Its pathway is amino-acid biosynthesis; L-arginine biosynthesis; L-arginine from L-ornithine and carbamoyl phosphate: step 3/3. The chain is Argininosuccinate lyase from Thermobifida fusca (strain YX).